The sequence spans 170 residues: Endoribonuclease YbeY (170 aa).

3 residues coordinate Zn(2+): His128, His132, and His138.

It belongs to the endoribonuclease YbeY family. The cofactor is Zn(2+).

The protein localises to the cytoplasm. In terms of biological role, single strand-specific metallo-endoribonuclease involved in late-stage 70S ribosome quality control and in maturation of the 3' terminus of the 16S rRNA. This is Endoribonuclease YbeY from Ruegeria sp. (strain TM1040) (Silicibacter sp.).